The primary structure comprises 179 residues: Large ribosomal subunit protein uL5 (179 aa).

The protein belongs to the universal ribosomal protein uL5 family. Part of the 50S ribosomal subunit; part of the 5S rRNA/L5/L18/L25 subcomplex. Contacts the 5S rRNA and the P site tRNA. Forms a bridge to the 30S subunit in the 70S ribosome.

Functionally, this is one of the proteins that bind and probably mediate the attachment of the 5S RNA into the large ribosomal subunit, where it forms part of the central protuberance. In the 70S ribosome it contacts protein S13 of the 30S subunit (bridge B1b), connecting the 2 subunits; this bridge is implicated in subunit movement. Contacts the P site tRNA; the 5S rRNA and some of its associated proteins might help stabilize positioning of ribosome-bound tRNAs. The sequence is that of Large ribosomal subunit protein uL5 from Chromohalobacter salexigens (strain ATCC BAA-138 / DSM 3043 / CIP 106854 / NCIMB 13768 / 1H11).